A 604-amino-acid polypeptide reads, in one-letter code: Microtubule-associated protein 70-4 (604 aa).

Residues 1–33 are disordered; sequence MEERGFMSPSLAISASYREGGSKGMSRRRSMRP. The stretch at 49-351 forms a coiled coil; that stretch reads DPVRIELNRL…ADRAAKSEAQ (303 aa). The segment at 233–470 is required for targeting to microtubules; that stretch reads IIDKMHRQKV…PLNHKSSEGT (238 aa). Disordered regions lie at residues 367 to 422 and 434 to 495; these read LKGP…RSLT and GTSR…NDSV. Positions 371 to 385 are enriched in low complexity; it reads TSSSSRGTSVGRSSS. 2 stretches are compositionally biased toward polar residues: residues 401–422 and 468–478; these read PKIT…RSLT and EGTSRGESPSS. The stretch at 521-569 forms a coiled coil; that stretch reads LRDKDEAIEMLAKKVETLTKAMDVEAKKMRREVAVMGKEVAAMRVVDKG.

Belongs to the MAP70 family.

It is found in the cytoplasm. Its subcellular location is the cytoskeleton. In terms of biological role, plant-specific protein that interact with microtubules. The chain is Microtubule-associated protein 70-4 (MAP70.4) from Arabidopsis thaliana (Mouse-ear cress).